The primary structure comprises 802 residues: Peptidyl serine alpha-galactosyltransferase (802 aa).

The signal sequence occupies residues 1 to 19 (MRWDLITAIVAALVVSVLA). At 20–750 (DESGQMAPYR…SEGRFSTLKL (731 aa)) the chain is on the extracellular side. 4 N-linked (GlcNAc...) asparagine glycosylation sites follow: N214, N275, N425, and N637. Residues 699 to 741 (RNCPEPGSESTEKISVSRKVGNIETKQTQGSDETKESSGSSES) are disordered. Residues 751–771 (WVIALWLISGVGFLVVMLLVF) form a helical membrane-spanning segment. Over 772–802 (STRRGRGTTRGKGYRNKRRTSYSNTGFLDTK) the chain is Cytoplasmic. Over residues 777 to 791 (RGTTRGKGYRNKRRT) the composition is skewed to basic residues. The segment at 777 to 802 (RGTTRGKGYRNKRRTSYSNTGFLDTK) is disordered. The span at 792-802 (SYSNTGFLDTK) shows a compositional bias: polar residues.

Its subcellular location is the endoplasmic reticulum membrane. In terms of biological role, glycosyltransferase involved in the O-galactosylation of several proteins including extensins. Catalyzes the transfer of alpha-galactosyl to Ser residues. Hydroxylation of proline residues adjacent to the serine acceptor is required for activity. This is Peptidyl serine alpha-galactosyltransferase from Arabidopsis thaliana (Mouse-ear cress).